The sequence spans 563 residues: MRLDLASLMSAPKSLGSAFKSWRLDKAPSPQHTFPSTSIPGMAFALLASVPPVFGLYTSFFPVLIYSLLGTGRHLSTGTFAILSLMTGSAVERLVPEPLVGNLSGIEKEQLDAQRVGVAAAVAFGSGALMLGMFVLQLGVLSTFLSEPVVKALTSGAALHVLLSQLPSLLGLSLPRQIGCFSLFKTLASLLTALPRSSPAELTISALSLALLVPVKELNVRFRDRLPTPIPGEVVLVLLASVLCFTSSVDTRYQVQIVGLLPGGFPQPLLPNLAELPRILADSLPIALVSFAVSASLASIHADKYSYTIDSNQEFLAHGASNLISSLFSCFPNSATLATTNLLVDAGGKTQLAGLFSCTVVLSVLLWLGPFFYYLPKAVLACINISSMRQVFCQMQELPQLWHISRVDFLLQVPGLCILSYPTPLYFGTRGQFRCNLEWHLGLGEGEKETSKPDGPMVAVAEPVRVVVLDFSGVTFADAAGAREVVQVRERLASRCRDARIRLLLAQCNALVQGTLTRVGLLDRVTPDQLFVSVQDAAAYALGSLLRGSSTRSGSQEALGCGK.

5 helical membrane-spanning segments follow: residues 45–65 (ALLASVPPVFGLYTSFFPVLI), 75–91 (LSTGTFAILSLMTGSAV), 116–136 (VGVAAAVAFGSGALMLGMFVL), 152–172 (ALTSGAALHVLLSQLPSLLGL), and 352–372 (LAGLFSCTVVLSVLLWLGPFF). Residues 406–541 (RVDFLLQVPG…VSVQDAAAYA (136 aa)) form the STAS domain.

The protein belongs to the SLC26A/SulP transporter (TC 2.A.53) family.

The protein localises to the membrane. Its function is as follows. Chloride/bicarbonate exchanger. The chain is Putative solute carrier family 26 member 10P (SLC26A10P) from Homo sapiens (Human).